The sequence spans 199 residues: NAD(P)H dehydrogenase (quinone) (199 aa).

One can recognise a Flavodoxin-like domain in the interval 4 to 190 (VLVLYYSAYG…AGARYQGQVI (187 aa)). FMN-binding positions include 10-15 (SAYGHI) and 78-80 (TRF). Tyrosine 12 lines the NAD(+) pocket. Residue tryptophan 98 participates in substrate binding. FMN contacts are provided by residues 113-119 (STATQHG) and histidine 134.

The protein belongs to the WrbA family. It depends on FMN as a cofactor.

The catalysed reaction is a quinone + NADH + H(+) = a quinol + NAD(+). It carries out the reaction a quinone + NADPH + H(+) = a quinol + NADP(+). In Rhodopseudomonas palustris (strain BisA53), this protein is NAD(P)H dehydrogenase (quinone).